Reading from the N-terminus, the 351-residue chain is Glycerol-3-phosphate dehydrogenase [NAD(P)+] (351 aa).

4 residues coordinate NADPH: Ser-12, Trp-13, His-33, and Lys-114. Sn-glycerol 3-phosphate-binding residues include Lys-114, Gly-145, and Ser-147. Ala-149 provides a ligand contact to NADPH. Sn-glycerol 3-phosphate contacts are provided by Lys-200, Asp-253, Ser-263, Arg-264, and Asn-265. The Proton acceptor role is filled by Lys-200. An NADPH-binding site is contributed by Arg-264. 2 residues coordinate NADPH: Val-288 and Glu-290.

The protein belongs to the NAD-dependent glycerol-3-phosphate dehydrogenase family.

It is found in the cytoplasm. It carries out the reaction sn-glycerol 3-phosphate + NAD(+) = dihydroxyacetone phosphate + NADH + H(+). The enzyme catalyses sn-glycerol 3-phosphate + NADP(+) = dihydroxyacetone phosphate + NADPH + H(+). It functions in the pathway membrane lipid metabolism; glycerophospholipid metabolism. In terms of biological role, catalyzes the reduction of the glycolytic intermediate dihydroxyacetone phosphate (DHAP) to sn-glycerol 3-phosphate (G3P), the key precursor for phospholipid synthesis. The polypeptide is Glycerol-3-phosphate dehydrogenase [NAD(P)+] (Lacticaseibacillus casei (strain BL23) (Lactobacillus casei)).